Consider the following 294-residue polypeptide: Acetylglutamate kinase (294 aa).

Substrate contacts are provided by residues 67-68 (GG), Arg-89, and Asn-193.

This sequence belongs to the acetylglutamate kinase family. ArgB subfamily.

The protein localises to the cytoplasm. The enzyme catalyses N-acetyl-L-glutamate + ATP = N-acetyl-L-glutamyl 5-phosphate + ADP. The protein operates within amino-acid biosynthesis; L-arginine biosynthesis; N(2)-acetyl-L-ornithine from L-glutamate: step 2/4. Functionally, catalyzes the ATP-dependent phosphorylation of N-acetyl-L-glutamate. The protein is Acetylglutamate kinase of Leptospira interrogans serogroup Icterohaemorrhagiae serovar copenhageni (strain Fiocruz L1-130).